The primary structure comprises 309 residues: Homoserine O-acetyltransferase (309 aa).

Cys142 serves as the catalytic Acyl-thioester intermediate. The substrate site is built by Lys163 and Ser192. Catalysis depends on His235, which acts as the Proton acceptor. Glu237 is a catalytic residue. Arg249 provides a ligand contact to substrate.

The protein belongs to the MetA family.

Its subcellular location is the cytoplasm. The catalysed reaction is L-homoserine + acetyl-CoA = O-acetyl-L-homoserine + CoA. It participates in amino-acid biosynthesis; L-methionine biosynthesis via de novo pathway; O-acetyl-L-homoserine from L-homoserine: step 1/1. Its function is as follows. Transfers an acetyl group from acetyl-CoA to L-homoserine, forming acetyl-L-homoserine. The polypeptide is Homoserine O-acetyltransferase (Allorhizobium ampelinum (strain ATCC BAA-846 / DSM 112012 / S4) (Agrobacterium vitis (strain S4))).